An 83-amino-acid chain; its full sequence is MSDKIRLLEGKVSSVAMDKTVVVRAERYVKHPLYGKFVKKTTKYYVHDEKNECKEGDVIKFKETRPYSKTKKWCLVDIINREK.

This sequence belongs to the universal ribosomal protein uS17 family. Part of the 30S ribosomal subunit.

In terms of biological role, one of the primary rRNA binding proteins, it binds specifically to the 5'-end of 16S ribosomal RNA. The polypeptide is Small ribosomal subunit protein uS17 (Francisella philomiragia subsp. philomiragia (strain ATCC 25017 / CCUG 19701 / FSC 153 / O#319-036)).